The following is a 204-amino-acid chain: Small ribosomal subunit protein uS7 (204 aa).

This sequence belongs to the universal ribosomal protein uS7 family. Part of the 30S ribosomal subunit.

In terms of biological role, one of the primary rRNA binding proteins, it binds directly to 16S rRNA where it nucleates assembly of the head domain of the 30S subunit. Is located at the subunit interface close to the decoding center. This chain is Small ribosomal subunit protein uS7, found in Methanoregula boonei (strain DSM 21154 / JCM 14090 / 6A8).